A 103-amino-acid chain; its full sequence is Pyrimidine/purine nucleoside phosphorylase (103 aa).

This sequence belongs to the nucleoside phosphorylase PpnP family.

It carries out the reaction a purine D-ribonucleoside + phosphate = a purine nucleobase + alpha-D-ribose 1-phosphate. The enzyme catalyses adenosine + phosphate = alpha-D-ribose 1-phosphate + adenine. It catalyses the reaction cytidine + phosphate = cytosine + alpha-D-ribose 1-phosphate. The catalysed reaction is guanosine + phosphate = alpha-D-ribose 1-phosphate + guanine. It carries out the reaction inosine + phosphate = alpha-D-ribose 1-phosphate + hypoxanthine. The enzyme catalyses thymidine + phosphate = 2-deoxy-alpha-D-ribose 1-phosphate + thymine. It catalyses the reaction uridine + phosphate = alpha-D-ribose 1-phosphate + uracil. The catalysed reaction is xanthosine + phosphate = alpha-D-ribose 1-phosphate + xanthine. Functionally, catalyzes the phosphorolysis of diverse nucleosides, yielding D-ribose 1-phosphate and the respective free bases. Can use uridine, adenosine, guanosine, cytidine, thymidine, inosine and xanthosine as substrates. Also catalyzes the reverse reactions. The chain is Pyrimidine/purine nucleoside phosphorylase from Shewanella sp. (strain MR-4).